The sequence spans 313 residues: NADH-ubiquinone oxidoreductase chain 1 (313 aa).

The next 8 helical transmembrane spans lie at 6-26 (LLSG…FTLL), 71-91 (VFPF…LWIL), 105-125 (MLLF…AGWF), 149-169 (MSLI…SMIM), 173-193 (FFVW…VSCV), 220-242 (GVGF…VLVI), 255-275 (FGMG…WVRA), and 293-313 (YLPS…ILNG).

The protein belongs to the complex I subunit 1 family.

Its subcellular location is the mitochondrion inner membrane. The enzyme catalyses a ubiquinone + NADH + 5 H(+)(in) = a ubiquinol + NAD(+) + 4 H(+)(out). Core subunit of the mitochondrial membrane respiratory chain NADH dehydrogenase (Complex I) that is believed to belong to the minimal assembly required for catalysis. Complex I functions in the transfer of electrons from NADH to the respiratory chain. The immediate electron acceptor for the enzyme is believed to be ubiquinone. The polypeptide is NADH-ubiquinone oxidoreductase chain 1 (ND1) (Heterololigo bleekeri (Spear squid)).